Consider the following 509-residue polypeptide: Maturase K (509 aa).

Belongs to the intron maturase 2 family. MatK subfamily.

It localises to the plastid. The protein resides in the chloroplast. Its function is as follows. Usually encoded in the trnK tRNA gene intron. Probably assists in splicing its own and other chloroplast group II introns. This is Maturase K from Nicotiana sylvestris (Wood tobacco).